Consider the following 431-residue polypeptide: Cyclin-B2-4 (431 aa).

The segment at 1–30 (MGGSDENRHGVIGPMNRQQGGLRGGKVIPT) is disordered.

The protein belongs to the cyclin family. Cyclin AB subfamily. In terms of assembly, interacts with SMR11.

The sequence is that of Cyclin-B2-4 (CYCB2-4) from Arabidopsis thaliana (Mouse-ear cress).